The primary structure comprises 656 residues: Protein terminal ear1 (656 aa).

Positions 211–283 (SLVVLSPLPG…RRLVVEFTRP (73 aa)) constitute an RRM domain. Disordered stretches follow at residues 280–408 (FTRP…WKGR) and 576–656 (LTDP…GYDD). Positions 288–299 (PRRRGYAPHQHR) are enriched in basic residues. Residues 314–331 (PSQPTSSQPPASSSSSGS) are compositionally biased toward low complexity. The span at 346-358 (CKSSAGSDQSSKG) shows a compositional bias: polar residues. 3 stretches are compositionally biased toward low complexity: residues 377-397 (AAAA…QKGV), 585-601 (RSPA…SRAA), and 612-630 (PAPS…STHA). The segment covering 642 to 656 (DIRLAGELRRLGYDD) has biased composition (basic and acidic residues).

In terms of tissue distribution, expressed below the shoot tip down the flanks of shoot apex in an alternating pattern. Not expressed in root tips, leaves or immature ears (female inflorescences).

Its function is as follows. Probable RNA-binding protein. Involved in the regulation of leaf initiation rate and shoot development. Seems to act more predominantly in the early stages of the leaf development, rather than in the later phase. The protein is Protein terminal ear1 (TE1) of Zea mays (Maize).